A 494-amino-acid polypeptide reads, in one-letter code: Catalase (494 aa).

Residues histidine 65 and asparagine 138 contribute to the active site. Tyrosine 348 is a binding site for heme.

The protein belongs to the catalase family. Homotetramer. The cofactor is heme.

The protein localises to the cytoplasm. The protein resides in the cytosol. It is found in the peroxisome matrix. The catalysed reaction is 2 H2O2 = O2 + 2 H2O. Functionally, catalyzes the degradation of hydrogen peroxide (H(2)O(2)) generated by peroxisomal oxidases to water and oxygen, thereby protecting cells from the toxic effects of hydrogen peroxide. The polypeptide is Catalase (Pisum sativum (Garden pea)).